A 673-amino-acid polypeptide reads, in one-letter code: uncharacterized protein (673 aa).

Topologically, residues 1-208 are cytoplasmic; it reads MSTHSNDYFS…STGQLELPPD (208 aa). A phosphoserine mark is found at serine 57, serine 112, and serine 172. Residues 209–229 traverse the membrane as a helical segment; the sequence is GGYGWVVTFCVFLTMFSTWGC. N-linked (GlcNAc...) asparagine glycosylation is present at asparagine 230. Residues 230–255 are Lumenal-facing; the sequence is NASFGVDLAYYLNHDTYPGASKYDYA. Residues 256-276 form a helical membrane-spanning segment; that stretch reads LIAGLTVFLGQLLSPLVMALM. Residue arginine 277 is a topological domain, cytoplasmic. A helical transmembrane segment spans residues 278–298; it reads IIGLRTTMLFGDAVMLAAYLL. The Lumenal segment spans residues 299–315; that stretch reads ASFTTKLWQLYVTQGFM. The helical transmembrane segment at 316–336 threads the bilayer; that stretch reads VGCSISLIFVPATTVLPGWFL. The Cytoplasmic portion of the chain corresponds to 337 to 339; it reads KKR. The helical transmembrane segment at 340–360 threads the bilayer; the sequence is AVAMGVSLLGTGAGGVVYGLA. At 361 to 372 the chain is on the lumenal side; the sequence is TNKMLSDFGNTR. The helical transmembrane segment at 373–393 threads the bilayer; sequence WCLRIIGISCSISVLVAIALL. The Cytoplasmic segment spans residues 394–426; sequence KERNPTPAIGLKSPRAMFEQLKAMFSLKVITKP. A helical transmembrane segment spans residues 427–447; that stretch reads FVVLIALWFMFALFAYNMMVF. Over 448 to 504 the chain is Lumenal; the sequence is TLSSYAISKGLSSHDASTLTAILNGSQSIGRPLMGLAGDKFGRANVTIVLTTLLTIY. N-linked (GlcNAc...) asparagine glycans are attached at residues asparagine 471 and asparagine 492. A helical membrane pass occupies residues 505 to 525; sequence MFAFWIPAHTFVQLIFFSILV. The Cytoplasmic segment spans residues 526–549; that stretch reads GSCVGVANVMNTVLIADMVKPEEF. Residues 550–570 traverse the membrane as a helical segment; the sequence is LPAWAFVNYCGAPFLLVCEVI. Topologically, residues 571-584 are lumenal; the sequence is AQALTVEKDKSNPY. A helical membrane pass occupies residues 585-605; that stretch reads LHAQIFCGCCFIAALILISIL. Residues 606-673 are Cytoplasmic-facing; sequence REYSIRMKLT…FLRMVYPMKV (68 aa). Serine 637 carries the phosphoserine modification.

The protein belongs to the major facilitator superfamily. Monocarboxylate porter (TC 2.A.1.13) family.

The protein resides in the endoplasmic reticulum membrane. This is an uncharacterized protein from Saccharomyces cerevisiae (strain ATCC 204508 / S288c) (Baker's yeast).